The chain runs to 325 residues: Ribosomal RNA small subunit methyltransferase H (325 aa).

S-adenosyl-L-methionine-binding positions include 41–43, aspartate 60, tyrosine 87, aspartate 108, and glutamine 115; that span reads GGH. The segment at 295-325 is disordered; sequence DDDEKAANPRAAPVRLRAAERTRASEDRRGS. Positions 311–325 are enriched in basic and acidic residues; sequence RAAERTRASEDRRGS.

Belongs to the methyltransferase superfamily. RsmH family.

The protein resides in the cytoplasm. It catalyses the reaction cytidine(1402) in 16S rRNA + S-adenosyl-L-methionine = N(4)-methylcytidine(1402) in 16S rRNA + S-adenosyl-L-homocysteine + H(+). In terms of biological role, specifically methylates the N4 position of cytidine in position 1402 (C1402) of 16S rRNA. The protein is Ribosomal RNA small subunit methyltransferase H of Leifsonia xyli subsp. xyli (strain CTCB07).